The primary structure comprises 143 residues: Holo-[acyl-carrier-protein] synthase (143 aa).

Mg(2+)-binding residues include Asp8 and Glu62.

This sequence belongs to the P-Pant transferase superfamily. AcpS family. It depends on Mg(2+) as a cofactor.

Its subcellular location is the cytoplasm. It catalyses the reaction apo-[ACP] + CoA = holo-[ACP] + adenosine 3',5'-bisphosphate + H(+). In terms of biological role, transfers the 4'-phosphopantetheine moiety from coenzyme A to a Ser of acyl-carrier-protein. The protein is Holo-[acyl-carrier-protein] synthase of Cupriavidus metallidurans (strain ATCC 43123 / DSM 2839 / NBRC 102507 / CH34) (Ralstonia metallidurans).